A 208-amino-acid chain; its full sequence is NAD(P)H-quinone oxidoreductase subunit M, chloroplastic (208 aa).

A chloroplast-targeting transit peptide spans 1–21 (MAATSSYTACTKFSMLGWIGG). A compositionally biased stretch (low complexity) spans 37-49 (QQAEVEESQQVNA). The tract at residues 37–70 (QQAEVEESQQVNAQEEEQEKMKQQGKQKLPRPVE) is disordered.

It belongs to the NDH complex subunit M family. As to quaternary structure, part of the chloroplast NDH complex, composed of a mixture of chloroplast and nucleus encoded subunits. Component of the NDH subcomplex A, at least composed of ndhH, ndhI, ndhJ, ndhK, ndhL, ndhM, ndhN and ndhO.

The protein resides in the plastid. Its subcellular location is the chloroplast thylakoid membrane. It catalyses the reaction a plastoquinone + NADH + (n+1) H(+)(in) = a plastoquinol + NAD(+) + n H(+)(out). The catalysed reaction is a plastoquinone + NADPH + (n+1) H(+)(in) = a plastoquinol + NADP(+) + n H(+)(out). NDH shuttles electrons from NAD(P)H:plastoquinone, via FMN and iron-sulfur (Fe-S) centers, to quinones in the photosynthetic chain and possibly in a chloroplast respiratory chain. The immediate electron acceptor for the enzyme in this species is believed to be plastoquinone. Couples the redox reaction to proton translocation, and thus conserves the redox energy in a proton gradient. This chain is NAD(P)H-quinone oxidoreductase subunit M, chloroplastic, found in Vitis vinifera (Grape).